We begin with the raw amino-acid sequence, 258 residues long: MIEKDFVVEGLRRTRIDEYLEKELERAGYGGMDVQVTPMGTMVVVYAERPGMVIGRGGKTVRAITQKLKNKFDLENPQVEVKEVDVPELNPKIMAHKIAAMLQRGMHFRRVAYTTMRRIMAAGAQGVEVTISGKIRGARSATAKFTDGYIKKCGEPSVKHVREGFATVQLKPGVLGVYVRIMPPDVVLPDKVEIEDPRVTETPAEEASEASEVVEDLEEVEDLEEIEDLEEVEDLEEVEDLEDTEAEKKDADGEESEK.

The KH type-2 domain occupies Ile16–Asp85. A disordered region spans residues Arg198–Lys258. The span at Pro203 to Glu245 shows a compositional bias: acidic residues.

Belongs to the universal ribosomal protein uS3 family. In terms of assembly, part of the 30S ribosomal subunit.

Binds the lower part of the 30S subunit head. The protein is Small ribosomal subunit protein uS3 of Methanothermobacter thermautotrophicus (strain ATCC 29096 / DSM 1053 / JCM 10044 / NBRC 100330 / Delta H) (Methanobacterium thermoautotrophicum).